Consider the following 696-residue polypeptide: SEC14 domain and spectrin repeat-containing protein 1 (696 aa).

One can recognise a CRAL-TRIO domain in the interval 1 to 153 (MDATVILPIL…EFGGSLTYDH (153 aa)). Spectrin repeat units lie at residues 272 to 378 (TQLD…NLLQ), 381 to 494 (LDFH…LKML), and 500 to 602 (FKCE…HRLE).

It belongs to the SOLO family.

Functionally, may act as the primary docking protein directing membrane turnover and assembly of the transient receptor potential channels trpc4 and trpc5. Binds phospholipids. The polypeptide is SEC14 domain and spectrin repeat-containing protein 1 (sestd1) (Xenopus tropicalis (Western clawed frog)).